The following is a 491-amino-acid chain: MKFKRLATIFSAVLVLSGCGSMHSSGKDLNISLPLKTKSIAPYETDVPVKIGAAESLFKTNDQGKIEKALVKSYHQPNDTTLDIELKDNIKFQNGQKLTAEKVKSSLENSMKKSDLVKYSLPISSITAKGQKLTIKTNSAYPELVSELANPFMAIYDTDAKSDVNQTPVGTGPYQIKDYKQSRKISLSNFKDYWQGKPKLDHITVTYQEDGNNRVRNLESQKDDLITDVPVNKVQDIENNQNLKVSKESGFRTSLLMYNHTNKKMTKSVREALDHIIDRQGIADHIYQGYAKPATSPFNDKIPYIKEPKLTKQNIEQAKMLLAKDGYTKEHPLKIKLITYDGRPELSKIAQVLQSDAKKANIEIDIKSVDDIEGYLKDRSAWDATMYSFGTIPRGDTGYFFNQAYKKDGAINKGDYNNSNVDDLINQLNHTVDVKERHNISNDIIKLSSRDVPNSYIAYNDQIVAANSKVKNYKVTPEGIYLIDYRTTIER.

The N-terminal stretch at 1–18 (MKFKRLATIFSAVLVLSG) is a signal peptide. A lipid anchor (N-palmitoyl cysteine) is attached at Cys-19. Cys-19 is lipidated: S-diacylglycerol cysteine.

This sequence belongs to the bacterial solute-binding protein 5 family. In terms of assembly, the complex is composed of two ATP-binding proteins (NikD and NikE), two transmembrane proteins (NikB and NikC) and a solute-binding protein (NikA).

It is found in the cell membrane. Its function is as follows. Part of the ABC transporter complex NikABCDE (Opp2) involved in nickel import. Binds nickel and transfers it to the membrane-bound permease. Required for full urease activity and plays a significant role in the virulence of S.aureus during urinary tract infection (UTI). May bind nickel via a nickel-chelator. The sequence is that of Nickel-binding protein NikA from Staphylococcus aureus (strain NCTC 8325 / PS 47).